Reading from the N-terminus, the 203-residue chain is Ribosome maturation factor RimP (203 aa).

A disordered region spans residues V179–K203.

This sequence belongs to the RimP family.

The protein localises to the cytoplasm. In terms of biological role, required for maturation of 30S ribosomal subunits. The polypeptide is Ribosome maturation factor RimP (Gluconobacter oxydans (strain 621H) (Gluconobacter suboxydans)).